We begin with the raw amino-acid sequence, 195 residues long: Peptidyl-tRNA hydrolase (195 aa).

Position 17 (Y17) interacts with tRNA. The active-site Proton acceptor is the H22. Positions 68, 70, and 116 each coordinate tRNA.

The protein belongs to the PTH family. In terms of assembly, monomer.

The protein resides in the cytoplasm. The catalysed reaction is an N-acyl-L-alpha-aminoacyl-tRNA + H2O = an N-acyl-L-amino acid + a tRNA + H(+). In terms of biological role, hydrolyzes ribosome-free peptidyl-tRNAs (with 1 or more amino acids incorporated), which drop off the ribosome during protein synthesis, or as a result of ribosome stalling. Its function is as follows. Catalyzes the release of premature peptidyl moieties from peptidyl-tRNA molecules trapped in stalled 50S ribosomal subunits, and thus maintains levels of free tRNAs and 50S ribosomes. This is Peptidyl-tRNA hydrolase from Shewanella sp. (strain ANA-3).